The primary structure comprises 360 residues: 3-isopropylmalate dehydrogenase (360 aa).

76 to 89 provides a ligand contact to NAD(+); the sequence is GPKWDKIERDIRPE. 4 residues coordinate substrate: arginine 96, arginine 106, arginine 134, and aspartate 224. Mg(2+) is bound by residues aspartate 224, aspartate 248, and aspartate 252. 282–294 contacts NAD(+); the sequence is GSAPDIAGLGIAN.

It belongs to the isocitrate and isopropylmalate dehydrogenases family. LeuB type 1 subfamily. In terms of assembly, homodimer. Requires Mg(2+) as cofactor. It depends on Mn(2+) as a cofactor.

Its subcellular location is the cytoplasm. It catalyses the reaction (2R,3S)-3-isopropylmalate + NAD(+) = 4-methyl-2-oxopentanoate + CO2 + NADH. Its pathway is amino-acid biosynthesis; L-leucine biosynthesis; L-leucine from 3-methyl-2-oxobutanoate: step 3/4. Catalyzes the oxidation of 3-carboxy-2-hydroxy-4-methylpentanoate (3-isopropylmalate) to 3-carboxy-4-methyl-2-oxopentanoate. The product decarboxylates to 4-methyl-2 oxopentanoate. The sequence is that of 3-isopropylmalate dehydrogenase from Pseudomonas putida (strain ATCC 47054 / DSM 6125 / CFBP 8728 / NCIMB 11950 / KT2440).